The following is a 74-amino-acid chain: ATP synthase subunit 9, mitochondrial (74 aa).

2 helical membrane-spanning segments follow: residues 8–28 (IGAG…GNVF) and 45–72 (LFGY…LILF).

It belongs to the ATPase C chain family. F-type ATPases have 2 components, CF(1) - the catalytic core - and CF(0) - the membrane proton channel. CF(1) has five subunits: alpha(3), beta(3), gamma(1), delta(1), epsilon(1). CF(0) has three main subunits: a, b and c.

It localises to the mitochondrion membrane. Its function is as follows. This protein is one of the chains of the nonenzymatic membrane component (F0) of mitochondrial ATPase. The protein is ATP synthase subunit 9, mitochondrial (ATP9) of Pisum sativum (Garden pea).